The chain runs to 258 residues: SLA class II histocompatibility antigen, DQ haplotype D beta chain (258 aa).

A signal peptide spans 1 to 31 (MVALRLPRGLWTAALTVMLVVLGAPVAEGRD). Positions 32 to 123 (SPQDFVVQFK…IEEGTTLQRR (92 aa)) are beta-1. Residues 32–227 (SPQDFVVQFK…RAQSESAQSK (196 aa)) lie on the Extracellular side of the membrane. 2 disulfide bridges follow: Cys44–Cys108 and Cys146–Cys202. Asn48 carries an N-linked (GlcNAc...) asparagine glycan. Residues 124–217 (VQPTVTISPS…SLQSPILVEW (94 aa)) form a beta-2 region. The Ig-like C1-type domain maps to 126-230 (PTVTISPSKA…SESAQSKMLS (105 aa)). Positions 218–227 (RAQSESAQSK) are connecting peptide. Residues 228–248 (MLSGVGGFVLGLIFLGLGLFI) form a helical membrane-spanning segment. The Cytoplasmic portion of the chain corresponds to 249-258 (RHRSQKGLVR).

Belongs to the MHC class II family.

It localises to the membrane. This is SLA class II histocompatibility antigen, DQ haplotype D beta chain from Sus scrofa (Pig).